The chain runs to 283 residues: Polyamine aminopropyltransferase (283 aa).

The PABS domain maps to 2-238 (ELWYTEEWTE…GHWLFGFASK (237 aa)). Gln31 is a binding site for S-methyl-5'-thioadenosine. 2 residues coordinate spermidine: His62 and Asp86. S-methyl-5'-thioadenosine-binding positions include Glu106 and 137–138 (DG). The active-site Proton acceptor is the Asp156. 156–159 (DSTD) serves as a coordination point for spermidine. Pro163 lines the S-methyl-5'-thioadenosine pocket.

The protein belongs to the spermidine/spermine synthase family. As to quaternary structure, homodimer or homotetramer.

The protein localises to the cytoplasm. The enzyme catalyses S-adenosyl 3-(methylsulfanyl)propylamine + putrescine = S-methyl-5'-thioadenosine + spermidine + H(+). It functions in the pathway amine and polyamine biosynthesis; spermidine biosynthesis; spermidine from putrescine: step 1/1. Functionally, catalyzes the irreversible transfer of a propylamine group from the amino donor S-adenosylmethioninamine (decarboxy-AdoMet) to putrescine (1,4-diaminobutane) to yield spermidine. The protein is Polyamine aminopropyltransferase of Clostridioides difficile (strain 630) (Peptoclostridium difficile).